We begin with the raw amino-acid sequence, 342 residues long: Pyrophosphate--fructose 6-phosphate 1-phosphotransferase (342 aa).

Gly10 serves as a coordination point for diphosphate. Glu103 provides a ligand contact to Mg(2+). Substrate is bound by residues 126-128, Arg163, 170-172, Glu222, Arg266, and 272-275; these read TID, MGR, and HVQR. Asp128 serves as the catalytic Proton acceptor.

This sequence belongs to the phosphofructokinase type A (PFKA) family. Mixed-substrate PFK group III subfamily. As to quaternary structure, homodimer or homotetramer. Requires Mg(2+) as cofactor.

The protein resides in the cytoplasm. It catalyses the reaction beta-D-fructose 6-phosphate + diphosphate = beta-D-fructose 1,6-bisphosphate + phosphate + H(+). The protein operates within carbohydrate degradation; glycolysis; D-glyceraldehyde 3-phosphate and glycerone phosphate from D-glucose: step 3/4. With respect to regulation, non-allosteric. Catalyzes the phosphorylation of D-fructose 6-phosphate, the first committing step of glycolysis. Uses inorganic phosphate (PPi) as phosphoryl donor instead of ATP like common ATP-dependent phosphofructokinases (ATP-PFKs), which renders the reaction reversible, and can thus function both in glycolysis and gluconeogenesis. Consistently, PPi-PFK can replace the enzymes of both the forward (ATP-PFK) and reverse (fructose-bisphosphatase (FBPase)) reactions. The sequence is that of Pyrophosphate--fructose 6-phosphate 1-phosphotransferase from Streptomyces coelicolor (strain ATCC BAA-471 / A3(2) / M145).